The chain runs to 209 residues: Kynurenine formamidase (209 aa).

A substrate-binding site is contributed by W20. Residues H50, H54, and D56 each coordinate Zn(2+). Catalysis depends on H60, which acts as the Proton donor/acceptor. Residues H161 and E173 each coordinate Zn(2+).

The protein belongs to the Cyclase 1 superfamily. KynB family. In terms of assembly, homodimer. Zn(2+) is required as a cofactor.

It carries out the reaction N-formyl-L-kynurenine + H2O = L-kynurenine + formate + H(+). Its pathway is amino-acid degradation; L-tryptophan degradation via kynurenine pathway; L-kynurenine from L-tryptophan: step 2/2. Catalyzes the hydrolysis of N-formyl-L-kynurenine to L-kynurenine, the second step in the kynurenine pathway of tryptophan degradation. The protein is Kynurenine formamidase of Bacillus cereus (strain ZK / E33L).